Reading from the N-terminus, the 443-residue chain is EP1-like glycoprotein 4 (443 aa).

A signal peptide spans 1 to 22 (MEFSTTLALFFTLSIFLVGAQA). Residues 29–159 (QFRVVNEGGY…NGKFVWQSFD (131 aa)) enclose the Bulb-type lectin domain. N-linked (GlcNAc...) asparagine glycosylation is found at Asn-66, Asn-102, Asn-258, and Asn-269. The stretch at 254-296 (GSQFNVSTFLSRPKHNATLSFLRLESDGNIRVWSYSTLATSTA) is one WD repeat. In terms of domain architecture, PAN spans 356-433 (CDPKTFHYFK…TSLVAYVKAP (78 aa)). 2 disulfides stabilise this stretch: Cys-387-Cys-409 and Cys-391-Cys-397. Residue Asn-434 is glycosylated (N-linked (GlcNAc...) asparagine).

Its subcellular location is the secreted. The protein localises to the cell wall. This Arabidopsis thaliana (Mouse-ear cress) protein is EP1-like glycoprotein 4.